Here is a 45-residue protein sequence, read N- to C-terminus: Photosystem II reaction center protein K (45 aa).

Positions methionine 1–alanine 8 are excised as a propeptide. A helical membrane pass occupies residues isoleucine 16–alanine 40.

This sequence belongs to the PsbK family. As to quaternary structure, PSII is composed of 1 copy each of membrane proteins PsbA, PsbB, PsbC, PsbD, PsbE, PsbF, PsbH, PsbI, PsbJ, PsbK, PsbL, PsbM, PsbT, PsbX, PsbY, PsbZ, Psb30/Ycf12, peripheral proteins PsbO, CyanoQ (PsbQ), PsbU, PsbV and a large number of cofactors. It forms dimeric complexes.

Its subcellular location is the cellular thylakoid membrane. Its function is as follows. One of the components of the core complex of photosystem II (PSII). PSII is a light-driven water:plastoquinone oxidoreductase that uses light energy to abstract electrons from H(2)O, generating O(2) and a proton gradient subsequently used for ATP formation. It consists of a core antenna complex that captures photons, and an electron transfer chain that converts photonic excitation into a charge separation. This is Photosystem II reaction center protein K from Synechocystis sp. (strain ATCC 27184 / PCC 6803 / Kazusa).